The sequence spans 384 residues: S-adenosylmethionine synthase (384 aa).

Histidine 15 serves as a coordination point for ATP. Aspartate 17 is a binding site for Mg(2+). A K(+)-binding site is contributed by glutamate 43. 2 residues coordinate L-methionine: glutamate 56 and glutamine 99. The interval 99 to 109 (QSPDINQGVDR) is flexible loop. ATP-binding positions include 164-166 (DAK), 230-231 (RF), aspartate 239, 245-246 (RK), alanine 262, and lysine 266. L-methionine is bound at residue aspartate 239. Lysine 270 is a binding site for L-methionine.

It belongs to the AdoMet synthase family. Homotetramer; dimer of dimers. Mg(2+) is required as a cofactor. The cofactor is K(+).

It is found in the cytoplasm. The catalysed reaction is L-methionine + ATP + H2O = S-adenosyl-L-methionine + phosphate + diphosphate. The protein operates within amino-acid biosynthesis; S-adenosyl-L-methionine biosynthesis; S-adenosyl-L-methionine from L-methionine: step 1/1. In terms of biological role, catalyzes the formation of S-adenosylmethionine (AdoMet) from methionine and ATP. The overall synthetic reaction is composed of two sequential steps, AdoMet formation and the subsequent tripolyphosphate hydrolysis which occurs prior to release of AdoMet from the enzyme. The sequence is that of S-adenosylmethionine synthase from Shigella boydii serotype 18 (strain CDC 3083-94 / BS512).